Reading from the N-terminus, the 440-residue chain is Histidinol dehydrogenase (440 aa).

NAD(+)-binding residues include Tyr-139, Gln-201, and Asn-224. Ser-247, Gln-269, and His-272 together coordinate substrate. Zn(2+) contacts are provided by Gln-269 and His-272. Residues Glu-337 and His-338 each act as proton acceptor in the active site. Residues His-338, Asp-371, Glu-425, and His-430 each contribute to the substrate site. Asp-371 is a binding site for Zn(2+). Position 430 (His-430) interacts with Zn(2+).

It belongs to the histidinol dehydrogenase family. Requires Zn(2+) as cofactor.

The catalysed reaction is L-histidinol + 2 NAD(+) + H2O = L-histidine + 2 NADH + 3 H(+). It participates in amino-acid biosynthesis; L-histidine biosynthesis; L-histidine from 5-phospho-alpha-D-ribose 1-diphosphate: step 9/9. Its function is as follows. Catalyzes the sequential NAD-dependent oxidations of L-histidinol to L-histidinaldehyde and then to L-histidine. This chain is Histidinol dehydrogenase, found in Prochlorococcus marinus (strain MIT 9312).